Here is a 555-residue protein sequence, read N- to C-terminus: Dihydroxy-acid dehydratase (555 aa).

Residue Asp-78 coordinates Mg(2+). Residue Cys-119 coordinates [2Fe-2S] cluster. Asp-120 and Lys-121 together coordinate Mg(2+). Position 121 is an N6-carboxylysine (Lys-121). Position 191 (Cys-191) interacts with [2Fe-2S] cluster. Glu-444 provides a ligand contact to Mg(2+). Ser-470 serves as the catalytic Proton acceptor.

Belongs to the IlvD/Edd family. As to quaternary structure, homodimer. Requires [2Fe-2S] cluster as cofactor. Mg(2+) serves as cofactor.

It catalyses the reaction (2R)-2,3-dihydroxy-3-methylbutanoate = 3-methyl-2-oxobutanoate + H2O. It carries out the reaction (2R,3R)-2,3-dihydroxy-3-methylpentanoate = (S)-3-methyl-2-oxopentanoate + H2O. It participates in amino-acid biosynthesis; L-isoleucine biosynthesis; L-isoleucine from 2-oxobutanoate: step 3/4. Its pathway is amino-acid biosynthesis; L-valine biosynthesis; L-valine from pyruvate: step 3/4. In terms of biological role, functions in the biosynthesis of branched-chain amino acids. Catalyzes the dehydration of (2R,3R)-2,3-dihydroxy-3-methylpentanoate (2,3-dihydroxy-3-methylvalerate) into 2-oxo-3-methylpentanoate (2-oxo-3-methylvalerate) and of (2R)-2,3-dihydroxy-3-methylbutanoate (2,3-dihydroxyisovalerate) into 2-oxo-3-methylbutanoate (2-oxoisovalerate), the penultimate precursor to L-isoleucine and L-valine, respectively. The protein is Dihydroxy-acid dehydratase of Maridesulfovibrio salexigens (strain ATCC 14822 / DSM 2638 / NCIMB 8403 / VKM B-1763) (Desulfovibrio salexigens).